A 517-amino-acid polypeptide reads, in one-letter code: Bifunctional purine biosynthesis protein PurH (517 aa).

Positions 1-151 (MTQERKIKRA…KNFAHVAVLC (151 aa)) constitute an MGS-like domain.

It belongs to the PurH family.

It carries out the reaction (6R)-10-formyltetrahydrofolate + 5-amino-1-(5-phospho-beta-D-ribosyl)imidazole-4-carboxamide = 5-formamido-1-(5-phospho-D-ribosyl)imidazole-4-carboxamide + (6S)-5,6,7,8-tetrahydrofolate. The enzyme catalyses IMP + H2O = 5-formamido-1-(5-phospho-D-ribosyl)imidazole-4-carboxamide. It functions in the pathway purine metabolism; IMP biosynthesis via de novo pathway; 5-formamido-1-(5-phospho-D-ribosyl)imidazole-4-carboxamide from 5-amino-1-(5-phospho-D-ribosyl)imidazole-4-carboxamide (10-formyl THF route): step 1/1. The protein operates within purine metabolism; IMP biosynthesis via de novo pathway; IMP from 5-formamido-1-(5-phospho-D-ribosyl)imidazole-4-carboxamide: step 1/1. In Elusimicrobium minutum (strain Pei191), this protein is Bifunctional purine biosynthesis protein PurH.